Here is a 209-residue protein sequence, read N- to C-terminus: Probable peptide export ATP-binding protein YydI (209 aa).

In terms of domain architecture, ABC transporter spans 1 to 207 (MNIANYTLKV…SVDKLIEVYI (207 aa)). Residue 33 to 40 (GKNGVGKS) participates in ATP binding.

It belongs to the ABC transporter superfamily. The complex is composed of two ATP-binding proteins (YydI), two transmembrane proteins (YydJ).

Functionally, suggested to be part of an ABC transporter complex YydIJ involved in export of the modified peptide YydF. Responsible for energy coupling to the transport system. The chain is Probable peptide export ATP-binding protein YydI (yydI) from Bacillus subtilis (strain 168).